An 821-amino-acid polypeptide reads, in one-letter code: Calpain-3 (821 aa).

The segment at 1–34 (MPTVISASMAPRTGASQVPRTMPQAAQGKGTEAG) is disordered. One can recognise a Calpain catalytic domain in the interval 73 to 417 (LYLDPEFPPD…FTKLEICNLT (345 aa)). Catalysis depends on residues Cys128, His334, and Asn358. The tract at residues 418-586 (ADALESDKLQ…KRNLSEEVEN (169 aa)) is domain III. The segment at 587-649 (TISVDRPVRK…EPSNTDQESE (63 aa)) is linker. Residues 603–652 (IFVSDRANSNKELGVDQESEEGQDKTSPDKQEKSPKPEPSNTDQESEEQQ) are disordered. Positions 624–638 (GQDKTSPDKQEKSPK) are enriched in basic and acidic residues. Residues 641–652 (PSNTDQESEEQQ) show a composition bias toward polar residues. EF-hand domains lie at 649 to 683 (EEQQQFRNIFRQIAGDDMEICADELKNVLNRVVNK), 692 to 725 (FTLESCRSMIALMDTDGSGRLNLQEFHHLWKKIK), 722 to 757 (KKIKSWQKIFKHYDTDQSGTINSYEMRNAVNDAGFH), and 787 to 821 (VRLEGMFRAFNAFDKDGDGIIKLNVLEWLQLTMYA). Positions 650–821 (EQQQFRNIFR…LEWLQLTMYA (172 aa)) are domain IV. 18 residues coordinate Ca(2+): Ala662, Asp665, Glu667, Glu672, Asp705, Asp707, Ser709, Arg711, Glu716, Asp735, Asp737, Ser739, Thr741, Glu746, Asp800, Asp802, Asp804, and Ile806.

This sequence belongs to the peptidase C2 family. In terms of assembly, homodimer; via EF-hand domain 4. Interacts with TTN/titin. Interacts with CMYA5; this interaction, which results in CMYA5 proteolysis, may protect CAPN3 from autolysis. Interacts with SIMC1. Interacts with UTP25; the interaction is required for CAPN3 translocation to the nucleolus. Skeletal muscle.

Its subcellular location is the cytoplasm. It is found in the nucleus. The protein localises to the nucleolus. The catalysed reaction is Broad endopeptidase activity.. Its activity is regulated as follows. Activated by micromolar concentrations of calcium and inhibited by calpastatin. Functionally, calcium-regulated non-lysosomal thiol-protease. Proteolytically cleaves CTBP1. Mediates, with UTP25, the proteasome-independent degradation of p53/TP53. In Sus scrofa (Pig), this protein is Calpain-3 (CAPN3).